A 175-amino-acid chain; its full sequence is MFRQEMARYPKKSIKKRRVGRRKYGSKAATSHDYSSSGSILVPENTVKVFRIEPTDKTLPRYFIWKMFMLLVCKVKPGRILHWAMIKSSWEINQPTTCLEAPGLFIKPEHSHLVKLVCSGELEAGVATGTSDVECLLRKTTVLRKNVTEVDYLYLAFYCSSGVSINYQNRITYHV.

The tract at residues 1 to 35 (MFRQEMARYPKKSIKKRRVGRRKYGSKAATSHDYS) is disordered. Residues 9–25 (YPKKSIKKRRVGRRKYG) are compositionally biased toward basic residues.

The protein belongs to the nanoviridae capsid protein family.

The protein resides in the virion. The sequence is that of Capsid protein (DNA-S) from Musa (BBTV).